Consider the following 327-residue polypeptide: Malate dehydrogenase (327 aa).

12–18 (GAAGQIC) is a binding site for NAD(+). Substrate contacts are provided by R92 and R98. NAD(+) is bound by residues N105, Q112, and 129–131 (TGN). Residues N131 and R162 each coordinate substrate. Catalysis depends on H187, which acts as the Proton acceptor.

Belongs to the LDH/MDH superfamily. MDH type 2 family.

It carries out the reaction (S)-malate + NAD(+) = oxaloacetate + NADH + H(+). Functionally, catalyzes the reversible oxidation of malate to oxaloacetate. The chain is Malate dehydrogenase from Cutibacterium acnes (strain DSM 16379 / KPA171202) (Propionibacterium acnes).